Consider the following 213-residue polypeptide: Peroxiredoxin-5, mitochondrial (213 aa).

The N-terminal 51 residues, methionine 1 to threonine 51, are a transit peptide targeting the mitochondrion. In terms of domain architecture, Thioredoxin spans isoleucine 55 to leucine 213. N6-acetyllysine is present on lysine 74. Lysine 82 is modified (N6-acetyllysine; alternate). Position 82 is an N6-succinyllysine; alternate (lysine 82). Residue cysteine 99 is the Cysteine sulfenic acid (-SOH) intermediate of the active site. A lipid anchor (S-palmitoyl cysteine) is attached at cysteine 99. A disulfide bridge connects residues cysteine 99 and cysteine 203. N6-succinyllysine is present on lysine 115. Residues serine 170 and serine 181 each carry the phosphoserine modification. Residues serine 211–leucine 213 carry the Microbody targeting signal motif.

Belongs to the peroxiredoxin family. Prx5 subfamily. Monomer. In terms of processing, S-palmitoylated. Palmitoylation occurs on the active site, inhibiting its reactivity; therefore PRDX5 palmitoylation status determines its antioxidant capacity. Post-translationally, S-palmitoylated. Depalmitoylated by ABHD10.

It localises to the mitochondrion. The protein resides in the cytoplasm. Its subcellular location is the peroxisome matrix. It carries out the reaction a hydroperoxide + [thioredoxin]-dithiol = an alcohol + [thioredoxin]-disulfide + H2O. Functionally, thiol-specific peroxidase that catalyzes the reduction of hydrogen peroxide and organic hydroperoxides to water and alcohols, respectively. Plays a role in cell protection against oxidative stress by detoxifying peroxides and as sensor of hydrogen peroxide-mediated signaling events. This chain is Peroxiredoxin-5, mitochondrial, found in Rattus norvegicus (Rat).